The chain runs to 450 residues: Zinc finger protein 277 (450 aa).

Ala-2 is subject to N-acetylalanine. 2 C2H2-type zinc fingers span residues 224–248 (LQCLYCEKTFRDKNTLKDHMRKKQH) and 355–381 (HQCRCYGCHVKFKSKADLRTHMEETKH).

Belongs to the ZNF277 family. As to quaternary structure, interacts (via zinc-finger domains) with RPS2/40S ribosomal protein S2, perhaps as nascent RPS2 is synthesized during translation; the interaction is direct; the interaction is extra-ribosomal. Interaction with RPS2 competes with the binding of RPS2 to protein arginine methyltransferase PRMT3. Interacts with Polycomb group (PcG) complex protein BMI1. May be part of a complex including at least ZNF277, BMI1 and RNF2/RING2.

The protein localises to the nucleus. In terms of biological role, probable transcription factor. Involved in modulation of cellular senescence; represses transcription of the tumor suppressor gene INK4A/ARF, perhaps acting via the Polycomb group (PcG) complex PRC1. The chain is Zinc finger protein 277 (ZNF277) from Homo sapiens (Human).